The sequence spans 314 residues: Serine protease 46 (314 aa).

In terms of domain architecture, Peptidase S1 spans 44 to 281 (VVNGKAVEVG…FTQWIKRQIG (238 aa)). Cys69 and Cys85 are oxidised to a cystine. Residues His84 and Asp130 each act as charge relay system in the active site. 3 disulfides stabilise this stretch: Cys164–Cys239, Cys197–Cys219, and Cys229–Cys257. Ser233 functions as the Charge relay system in the catalytic mechanism. Residues 293–313 (FLSPFILTGYILLVSLGSLWL) form a helical membrane-spanning segment.

The protein belongs to the peptidase S1 family.

The protein localises to the membrane. This Mus musculus (Mouse) protein is Serine protease 46 (Prss46).